Here is a 328-residue protein sequence, read N- to C-terminus: RNA-binding motif protein, X-linked 2 (328 aa).

A Glycyl lysine isopeptide (Lys-Gly) (interchain with G-Cter in SUMO2) cross-link involves residue Lys-8. Residues Ala-36–Asn-114 enclose the RRM domain. Residues Pro-118–Tyr-328 form a disordered region. Thr-140 carries the phosphothreonine modification. Phosphoserine is present on Ser-149. The segment covering Thr-157–Glu-172 has biased composition (basic residues). 3 stretches are compositionally biased toward basic and acidic residues: residues Thr-192 to Glu-219, Gly-236 to Lys-247, and Lys-255 to Arg-273. A Glycyl lysine isopeptide (Lys-Gly) (interchain with G-Cter in SUMO2) cross-link involves residue Lys-246. Ser-274 is subject to Phosphoserine. Residues His-291–Ser-314 are compositionally biased toward basic residues. The span at His-315–Tyr-328 shows a compositional bias: basic and acidic residues.

Belongs to the IST3 family. Part of the activated spliceosome B/catalytic step 1 spliceosome, one of the forms of the spliceosome which has a well-formed active site but still cannot catalyze the branching reaction and is composed of at least 52 proteins, the U2, U5 and U6 snRNAs and the pre-mRNA. Component of the minor spliceosome, which splices U12-type introns.

The protein localises to the nucleus. Its function is as follows. Involved in pre-mRNA splicing as component of the activated spliceosome. As a component of the minor spliceosome, involved in the splicing of U12-type introns in pre-mRNAs. This chain is RNA-binding motif protein, X-linked 2 (Rbmx2), found in Rattus norvegicus (Rat).